The following is a 129-amino-acid chain: Mini-ribonuclease 3-like protein (129 aa).

Asp23 is an active-site residue.

The protein belongs to the MrnC RNase family.

In terms of biological role, might be a ribonuclease involved in RNA processing. This chain is Mini-ribonuclease 3-like protein (mrnCL), found in Fusobacterium nucleatum subsp. nucleatum (strain ATCC 25586 / DSM 15643 / BCRC 10681 / CIP 101130 / JCM 8532 / KCTC 2640 / LMG 13131 / VPI 4355).